Reading from the N-terminus, the 106-residue chain is YcgL domain-containing protein PsycPRwf_1721 (106 aa).

One can recognise a YcgL domain in the interval 1–94 (MHCDIYKFPK…PSDVLLAQAQ (94 aa)).

This is YcgL domain-containing protein PsycPRwf_1721 from Psychrobacter sp. (strain PRwf-1).